Here is a 333-residue protein sequence, read N- to C-terminus: 4-hydroxy-3-methylbut-2-enyl diphosphate reductase (333 aa).

C20 contacts [4Fe-4S] cluster. 2 residues coordinate (2E)-4-hydroxy-3-methylbut-2-enyl diphosphate: H49 and H85. Residues H49 and H85 each contribute to the dimethylallyl diphosphate site. Isopentenyl diphosphate-binding residues include H49 and H85. C107 is a [4Fe-4S] cluster binding site. H135 provides a ligand contact to (2E)-4-hydroxy-3-methylbut-2-enyl diphosphate. A dimethylallyl diphosphate-binding site is contributed by H135. H135 is a binding site for isopentenyl diphosphate. Residue E137 is the Proton donor of the active site. T176 lines the (2E)-4-hydroxy-3-methylbut-2-enyl diphosphate pocket. A [4Fe-4S] cluster-binding site is contributed by C206. The (2E)-4-hydroxy-3-methylbut-2-enyl diphosphate site is built by S234, S235, N236, and S279. S234, S235, N236, and S279 together coordinate dimethylallyl diphosphate. S234, S235, N236, and S279 together coordinate isopentenyl diphosphate.

This sequence belongs to the IspH family. [4Fe-4S] cluster is required as a cofactor.

It carries out the reaction isopentenyl diphosphate + 2 oxidized [2Fe-2S]-[ferredoxin] + H2O = (2E)-4-hydroxy-3-methylbut-2-enyl diphosphate + 2 reduced [2Fe-2S]-[ferredoxin] + 2 H(+). The enzyme catalyses dimethylallyl diphosphate + 2 oxidized [2Fe-2S]-[ferredoxin] + H2O = (2E)-4-hydroxy-3-methylbut-2-enyl diphosphate + 2 reduced [2Fe-2S]-[ferredoxin] + 2 H(+). The protein operates within isoprenoid biosynthesis; dimethylallyl diphosphate biosynthesis; dimethylallyl diphosphate from (2E)-4-hydroxy-3-methylbutenyl diphosphate: step 1/1. Its pathway is isoprenoid biosynthesis; isopentenyl diphosphate biosynthesis via DXP pathway; isopentenyl diphosphate from 1-deoxy-D-xylulose 5-phosphate: step 6/6. Functionally, catalyzes the conversion of 1-hydroxy-2-methyl-2-(E)-butenyl 4-diphosphate (HMBPP) into a mixture of isopentenyl diphosphate (IPP) and dimethylallyl diphosphate (DMAPP). Acts in the terminal step of the DOXP/MEP pathway for isoprenoid precursor biosynthesis. This chain is 4-hydroxy-3-methylbut-2-enyl diphosphate reductase, found in Rhizobium etli (strain CIAT 652).